Consider the following 310-residue polypeptide: MPKVRTKDVMDKFKLELISGEEGINRPITMSDLSRPGLEMAGYFTYYPKERVQLLGKTEITFFEKLPEEEKKQRMLSLCTEITPAIILSRDLPIPPELVEASEENGVPVLRSPLKTTRLTSRLTNFLESQLAPTTAIHGVLVDVYGVGVLIIGKSGVGKSETALELVKRGHRLVADDCVEIRQEDQDTLIGSAPELIEHLLEIRGLGIINVMTLFGAGAVRSFKRITLVMSLELWEQGKQYDRLGLEEETMKIIDTDVPKLTIPVRPGRNLAVIIEVAAMNFRLKRMGLNAAEQFTHKLADVIEDGELEE.

Residues H138 and K159 contribute to the active site. 153–160 (GKSGVGKS) contacts ATP. Residue S160 participates in Mg(2+) binding. Catalysis depends on D177, which acts as the Proton acceptor; for phosphorylation activity. Proton donor; for dephosphorylation activity. Residues 201-210 (LEIRGLGIIN) form an important for the catalytic mechanism of both phosphorylation and dephosphorylation region. E202 contributes to the Mg(2+) binding site. R243 is a catalytic residue. The tract at residues 264-269 (PVRPGR) is important for the catalytic mechanism of dephosphorylation.

The protein belongs to the HPrK/P family. In terms of assembly, homohexamer. Mg(2+) serves as cofactor.

The enzyme catalyses [HPr protein]-L-serine + ATP = [HPr protein]-O-phospho-L-serine + ADP + H(+). It carries out the reaction [HPr protein]-O-phospho-L-serine + phosphate + H(+) = [HPr protein]-L-serine + diphosphate. Catalyzes the ATP- as well as the pyrophosphate-dependent phosphorylation of a specific serine residue in HPr, a phosphocarrier protein of the phosphoenolpyruvate-dependent sugar phosphotransferase system (PTS). HprK/P also catalyzes the pyrophosphate-producing, inorganic phosphate-dependent dephosphorylation (phosphorolysis) of seryl-phosphorylated HPr (P-Ser-HPr). The two antagonistic activities of HprK/P are regulated by several intracellular metabolites, which change their concentration in response to the absence or presence of rapidly metabolisable carbon sources (glucose, fructose, etc.) in the growth medium. Also phosphorylates/dephosphorylates the HPr-like catabolite repression protein crh on a specific serine residue. Therefore, by controlling the phosphorylation state of HPr and crh, HPrK/P is a sensor enzyme that plays a major role in the regulation of carbon metabolism and sugar transport: it mediates carbon catabolite repression (CCR), and regulates PTS-catalyzed carbohydrate uptake and inducer exclusion. The chain is HPr kinase/phosphorylase from Bacillus licheniformis (strain ATCC 14580 / DSM 13 / JCM 2505 / CCUG 7422 / NBRC 12200 / NCIMB 9375 / NCTC 10341 / NRRL NRS-1264 / Gibson 46).